We begin with the raw amino-acid sequence, 539 residues long: Protein pim1 (539 aa).

Positions 1-53 (MTSNRSTRSSTKREEVSKNGVEKRELDESDVMKNGKKPVKRAKVSSLPKPVRV) are disordered. Residues 11–33 (TKREEVSKNGVEKRELDESDVMK) are compositionally biased toward basic and acidic residues. Positions 34–43 (NGKKPVKRAK) are enriched in basic residues. 7 RCC1 repeats span residues 70–125 (RLNV…ALSH), 127–191 (GRVY…AITD), 192–243 (NGCC…ALTT), 244–296 (TGKV…AIDN), 298–353 (GRVY…ALLE), 354–417 (DGRV…AVTS), and 419–472 (GKVY…IAGI). The disordered stretch occupies residues 478–539 (EPVANGIKSE…SVLEPSSTTA (62 aa)). The segment covering 486-504 (SEPENEKKLKTEETSKTDD) has biased composition (basic and acidic residues). Polar residues predominate over residues 514–525 (VTSNGEPSTATS).

Oligomer of dis3, pim1 and spi1. Interacts with ned1.

The protein resides in the nucleus. Its function is as follows. Promotes the exchange of Ran(spi1)-bound GDP by GTP. Involved in the control of mitosis. Regulates a variety of nuclear events, including mitotic check-point, chromosome decondensation and mRNA processing/transport. This chain is Protein pim1 (pim1), found in Schizosaccharomyces pombe (strain 972 / ATCC 24843) (Fission yeast).